Reading from the N-terminus, the 229-residue chain is uncharacterized protein (229 aa).

A run of 7 helical transmembrane segments spans residues 21 to 41 (IYSLVGMGVGLSAFVSYLMLY), 56 to 76 (MIYYGAAIIELILVFVASSAA), 83 to 103 (ALPIFLIYSALNGFTLSFIIV), 109 to 129 (TVFQAFLSSAAVFFAMSIIGV), 141 to 161 (AMFAALIGVVVASLINLFIGS), 162 to 182 (GMMSYVISVISVLIFSGLIAS), and 202 to 222 (WAVAMALSLYLDFINLFISLL).

Belongs to the BI1 family.

Its subcellular location is the cell membrane. This is an uncharacterized protein from Streptococcus pyogenes serotype M1.